The primary structure comprises 183 residues: MTTGLPSQRQVIELLGADFACAGYEIEDVVIDARARPPRIAVIADGDAPLDLDTIAALSRRASALLDGLDGANKIRGRYLLEVSSPGVERPLTSEKHFRRARGRKVELVLSDGSRLTGRVGEMRAGTVALVIREDRGWAVREIPLAEIVKAVVQVEFSPPAPAELELAQSSEMGLARGTEAGA.

Belongs to the RimP family.

The protein resides in the cytoplasm. In terms of biological role, required for maturation of 30S ribosomal subunits. This Mycobacterium bovis (strain ATCC BAA-935 / AF2122/97) protein is Ribosome maturation factor RimP.